The sequence spans 410 residues: Exodeoxyribonuclease 7 large subunit (410 aa).

Belongs to the XseA family. Heterooligomer composed of large and small subunits.

It localises to the cytoplasm. The catalysed reaction is Exonucleolytic cleavage in either 5'- to 3'- or 3'- to 5'-direction to yield nucleoside 5'-phosphates.. Functionally, bidirectionally degrades single-stranded DNA into large acid-insoluble oligonucleotides, which are then degraded further into small acid-soluble oligonucleotides. The protein is Exodeoxyribonuclease 7 large subunit of Alkaliphilus metalliredigens (strain QYMF).